The primary structure comprises 874 residues: Alanine--tRNA ligase (874 aa).

Residues histidine 562, histidine 566, cysteine 664, and histidine 668 each coordinate Zn(2+).

Belongs to the class-II aminoacyl-tRNA synthetase family. Zn(2+) serves as cofactor.

The protein localises to the cytoplasm. The catalysed reaction is tRNA(Ala) + L-alanine + ATP = L-alanyl-tRNA(Ala) + AMP + diphosphate. Its function is as follows. Catalyzes the attachment of alanine to tRNA(Ala) in a two-step reaction: alanine is first activated by ATP to form Ala-AMP and then transferred to the acceptor end of tRNA(Ala). Also edits incorrectly charged Ser-tRNA(Ala) and Gly-tRNA(Ala) via its editing domain. This chain is Alanine--tRNA ligase, found in Shewanella oneidensis (strain ATCC 700550 / JCM 31522 / CIP 106686 / LMG 19005 / NCIMB 14063 / MR-1).